The chain runs to 372 residues: MHEHSVEKTQILQKYLELPQNGKVIAEYVWVDGTGNLRSKARTLNKVITSIEQLPEWNFDGSSTNQAPGYDSDIYLKPVAFYPDPFRRGDNITVLAECFNSDGTPNKFNHRHEANKLFQAHKDEEIWFGIEQEYTLFDMYDNVYAWPKGGYPAPQGPYYCGVGAGKVYARDVIEAHYRACLYAGINISGINAEVMPSQWEFQVGPCEGISMGDQLWMARYFLHRVAEEFGVKISFHPKPLKGDWNGAGCHTNVSTKDMRVPGGMKYIEQAIEKLSKRHNEHIKLYGADNEQRLTGRHETASMTSFSSGVANRGASIRIPRPVAKEGFGYFEDRRPASNIDPYLVTGIMCETVCGAIENANMSKEYERETNEQ.

The region spanning 24–103 (VIAEYVWVDG…VLAECFNSDG (80 aa)) is the GS beta-grasp domain. A GS catalytic domain is found at 110-372 (HRHEANKLFQ…KEYERETNEQ (263 aa)).

This sequence belongs to the glutamine synthetase family. Homooctamer.

The protein resides in the cytoplasm. It carries out the reaction L-glutamate + NH4(+) + ATP = L-glutamine + ADP + phosphate + H(+). This is Glutamine synthetase (GLN1) from Candida glabrata (strain ATCC 2001 / BCRC 20586 / JCM 3761 / NBRC 0622 / NRRL Y-65 / CBS 138) (Yeast).